A 180-amino-acid chain; its full sequence is Ribulose bisphosphate carboxylase small subunit, chloroplastic 2 (180 aa).

The N-terminal 56 residues, 1 to 56 (MASSVISSAAVATRSNVTQASMVAPFTGLKSSATFPVTKKQNLDITSIASNGGRVS), are a transit peptide targeting the chloroplast.

This sequence belongs to the RuBisCO small chain family. In terms of assembly, heterohexadecamer of 8 large and 8 small subunits. As to quaternary structure, (Microbial infection) Binds to tobamovirus movement protein; this interaction seems required for viral systemic movement.

Its subcellular location is the plastid. It is found in the chloroplast. The protein resides in the cell junction. The protein localises to the plasmodesma. In terms of biological role, ruBisCO catalyzes two reactions: the carboxylation of D-ribulose 1,5-bisphosphate, the primary event in carbon dioxide fixation, as well as the oxidative fragmentation of the pentose substrate. Both reactions occur simultaneously and in competition at the same active site. Although the small subunit is not catalytic it is essential for maximal activity. Involved in antiviral defenses. The sequence is that of Ribulose bisphosphate carboxylase small subunit, chloroplastic 2 from Solanum lycopersicum (Tomato).